The chain runs to 537 residues: 4-coumarate--CoA ligase (537 aa).

Residues Ser189, Ser190, Gly191, Thr192, Thr193, and Lys197 each contribute to the ATP site. (E)-4-coumaroyl-AMP contacts are provided by Tyr239 and Ser243. Residue Lys260 participates in CoA binding. The interval 262 to 331 (NLTTCLELIQ…ERFPKAIFGQ (70 aa)) is SBD1. (E)-4-coumaroyl-AMP-binding residues include Ala309, Gln331, Gly332, Thr336, and Met344. Residues Gln331, Gly332, and Thr336 each contribute to the ATP site. Residues 332–399 (GYGMTEAGPV…IRGPEIMKGY (68 aa)) form an SBD2 region. 2 residues coordinate ATP: Asp420 and Arg435. (E)-4-coumaroyl-AMP is bound by residues Lys437 and Lys441. CoA is bound by residues Lys443 and Gly444. Lys524 is a binding site for ATP.

The protein belongs to the ATP-dependent AMP-binding enzyme family. Mg(2+) serves as cofactor.

The catalysed reaction is (E)-4-coumarate + ATP + CoA = (E)-4-coumaroyl-CoA + AMP + diphosphate. It catalyses the reaction (E)-4-coumarate + ATP + H(+) = (E)-4-coumaroyl-AMP + diphosphate. It carries out the reaction (E)-4-coumaroyl-AMP + CoA = (E)-4-coumaroyl-CoA + AMP + H(+). It functions in the pathway phytoalexin biosynthesis; 3,4',5-trihydroxystilbene biosynthesis; 3,4',5-trihydroxystilbene from trans-4-coumarate: step 1/2. Carboxylate--CoA ligase that may use 4-coumarate as substrate. Follows a two-step reaction mechanism, wherein the carboxylate substrate first undergoes adenylation by ATP, followed by a thioesterification in the presence of CoA to yield the final CoA thioester. This is 4-coumarate--CoA ligase (4CL) from Pinus taeda (Loblolly pine).